We begin with the raw amino-acid sequence, 306 residues long: Axin interactor, dorsalization-associated protein (306 aa).

A coiled-coil region spans residues 27–62 (QLVEAIDEYQILARHLQKEAQAQHNNSEFTEEQKKT). Positions 128–138 (NLEFEEDEEEG) are enriched in acidic residues. The tract at residues 128–153 (NLEFEEDEEEGGAGAGSPDSFPARVP) is disordered. At Ser144 the chain carries Phosphoserine. The axin-binding stretch occupies residues 154–221 (GTLLPRLPSE…RKEDTYVHFN (68 aa)). The C2 Aida-type domain maps to 157-304 (LPRLPSEPGM…LYLHLHQTLH (148 aa)).

The protein belongs to the AIDA family. Interacts with AXIN1. Widely expressed in adult tissues, with highest expression in the heart and skeletal muscle.

Functionally, acts as a ventralizing factor during embryogenesis. Inhibits axin-mediated JNK activation by binding axin and disrupting axin homodimerization. This in turn antagonizes a Wnt/beta-catenin-independent dorsalization pathway activated by AXIN/JNK-signaling. The polypeptide is Axin interactor, dorsalization-associated protein (AIDA) (Homo sapiens (Human)).